The following is a 368-amino-acid chain: Cobalt-precorrin-5B C(1)-methyltransferase (368 aa).

It belongs to the CbiD family.

It carries out the reaction Co-precorrin-5B + S-adenosyl-L-methionine = Co-precorrin-6A + S-adenosyl-L-homocysteine. The protein operates within cofactor biosynthesis; adenosylcobalamin biosynthesis; cob(II)yrinate a,c-diamide from sirohydrochlorin (anaerobic route): step 6/10. Its function is as follows. Catalyzes the methylation of C-1 in cobalt-precorrin-5B to form cobalt-precorrin-6A. The sequence is that of Cobalt-precorrin-5B C(1)-methyltransferase from Brucella abortus (strain S19).